A 73-amino-acid polypeptide reads, in one-letter code: Putative antitoxin VapB16 (73 aa).

Belongs to the UPF0330 family.

Possibly the antitoxin component of a type II toxin-antitoxin (TA) system. Its cognate toxin is VapC16 (Potential). The polypeptide is Putative antitoxin VapB16 (vapB16) (Archaeoglobus fulgidus (strain ATCC 49558 / DSM 4304 / JCM 9628 / NBRC 100126 / VC-16)).